The primary structure comprises 98 residues: UPF0251 protein Sputw3181_3483 (98 aa).

The protein belongs to the UPF0251 family.

This chain is UPF0251 protein Sputw3181_3483, found in Shewanella sp. (strain W3-18-1).